Reading from the N-terminus, the 265-residue chain is Serine protease 1 (265 aa).

The first 21 residues, 1–21, serve as a signal peptide directing secretion; that stretch reads MKLFVFLALAVAAATAVPAPA. A propeptide spanning residues 22-35 is cleaved from the precursor; the sequence is QKLTPTPIKDIQGR. Residues 36–262 enclose the Peptidase S1 domain; sequence ITNGYPAYEG…YLDWIRDNTG (227 aa). A disulfide bridge links Cys-63 with Cys-79. Residues His-78 and Asp-123 each act as charge relay system in the active site. 2 disulfide bridges follow: Cys-189-Cys-201 and Cys-211-Cys-239. Ser-215 functions as the Charge relay system in the catalytic mechanism.

It belongs to the peptidase S1 family. Abundantly expressed in the larval gut.

Functionally, major function may be to aid in digestion. The polypeptide is Serine protease 1 (Drosophila melanogaster (Fruit fly)).